A 209-amino-acid chain; its full sequence is Ribosomal RNA small subunit methyltransferase G (209 aa).

S-adenosyl-L-methionine is bound by residues Gly71, Phe76, 122 to 123, and Arg135; that span reads AE.

Belongs to the methyltransferase superfamily. RNA methyltransferase RsmG family.

The protein localises to the cytoplasm. Functionally, specifically methylates the N7 position of a guanine in 16S rRNA. This Flavobacterium psychrophilum (strain ATCC 49511 / DSM 21280 / CIP 103535 / JIP02/86) protein is Ribosomal RNA small subunit methyltransferase G.